A 502-amino-acid chain; its full sequence is Cytochrome P450 71B17 (502 aa).

The helical transmembrane segment at 1-21 (MAISLLCLFLITFVSLTIVGC) threads the bilayer. Residue Cys444 coordinates heme.

The protein belongs to the cytochrome P450 family. The cofactor is heme.

It is found in the membrane. The sequence is that of Cytochrome P450 71B17 (CYP71B17) from Arabidopsis thaliana (Mouse-ear cress).